The following is a 283-amino-acid chain: MATYAVGDLQGCLEPLKCLLDRVAFDPAKDRLWLVGDVVNRGPESLETLRYLYSLRDSLVCVLGNHDLHLLAASNTIERLKKGDTLREILEAPDRAELLDWLRRQKIMHYDQGRNMALVHAGIPPQWTLKKALKCAAEVESALADDTLYTAYLDGMYGNDPVKWDNDLTGVARLRVITNYFTRMRFCTAEGKLDLKSKEGADTALPGYKPWFAHKERKTRDTKIVFGHWAALEGKCDEPGVFALDTGCVWGGAMTLMNIDTGERYSCQCESPLPVTLPATAKP.

It belongs to the Ap4A hydrolase family.

The catalysed reaction is P(1),P(4)-bis(5'-adenosyl) tetraphosphate + H2O = 2 ADP + 2 H(+). Functionally, hydrolyzes diadenosine 5',5'''-P1,P4-tetraphosphate to yield ADP. This is Bis(5'-nucleosyl)-tetraphosphatase, symmetrical from Pseudomonas fluorescens (strain SBW25).